The primary structure comprises 484 residues: Cobyric acid synthase (484 aa).

Residues 251-438 (ALKIAVPVLP…LHGLFCSDAY (188 aa)) enclose the GATase cobBQ-type domain. Catalysis depends on C333, which acts as the Nucleophile. The active site involves H430.

The protein belongs to the CobB/CobQ family. CobQ subfamily.

Its pathway is cofactor biosynthesis; adenosylcobalamin biosynthesis. Its function is as follows. Catalyzes amidations at positions B, D, E, and G on adenosylcobyrinic A,C-diamide. NH(2) groups are provided by glutamine, and one molecule of ATP is hydrogenolyzed for each amidation. The protein is Cobyric acid synthase of Rhizobium rhizogenes (strain K84 / ATCC BAA-868) (Agrobacterium radiobacter).